Here is a 194-residue protein sequence, read N- to C-terminus: Imidazole glycerol phosphate synthase subunit HisH (194 aa).

The Glutamine amidotransferase type-1 domain occupies 3–194; it reads RIAIVDLGIG…LILLRNFRRL (192 aa). The active-site Nucleophile is the Cys-74. Active-site residues include His-176 and Glu-178.

Heterodimer of HisH and HisF.

It localises to the cytoplasm. It catalyses the reaction 5-[(5-phospho-1-deoxy-D-ribulos-1-ylimino)methylamino]-1-(5-phospho-beta-D-ribosyl)imidazole-4-carboxamide + L-glutamine = D-erythro-1-(imidazol-4-yl)glycerol 3-phosphate + 5-amino-1-(5-phospho-beta-D-ribosyl)imidazole-4-carboxamide + L-glutamate + H(+). It carries out the reaction L-glutamine + H2O = L-glutamate + NH4(+). It functions in the pathway amino-acid biosynthesis; L-histidine biosynthesis; L-histidine from 5-phospho-alpha-D-ribose 1-diphosphate: step 5/9. IGPS catalyzes the conversion of PRFAR and glutamine to IGP, AICAR and glutamate. The HisH subunit catalyzes the hydrolysis of glutamine to glutamate and ammonia as part of the synthesis of IGP and AICAR. The resulting ammonia molecule is channeled to the active site of HisF. This is Imidazole glycerol phosphate synthase subunit HisH from Pyrococcus furiosus (strain ATCC 43587 / DSM 3638 / JCM 8422 / Vc1).